The chain runs to 329 residues: ADP-L-glycero-D-manno-heptose-6-epimerase (329 aa).

Residues 10-11 (FI), 31-32 (DD), K38, K53, 74-78 (QGACS), and N91 contribute to the NADP(+) site. Y138 acts as the Proton acceptor in catalysis. Residue K142 coordinates NADP(+). Residue N167 coordinates substrate. Positions 168 and 176 each coordinate NADP(+). The Proton acceptor role is filled by K176. Substrate is bound by residues R178, H185, 199–202 (FAGW), R212, and Y291.

It belongs to the NAD(P)-dependent epimerase/dehydratase family. HldD subfamily. In terms of assembly, homopentamer. It depends on NADP(+) as a cofactor.

The enzyme catalyses ADP-D-glycero-beta-D-manno-heptose = ADP-L-glycero-beta-D-manno-heptose. The protein operates within nucleotide-sugar biosynthesis; ADP-L-glycero-beta-D-manno-heptose biosynthesis; ADP-L-glycero-beta-D-manno-heptose from D-glycero-beta-D-manno-heptose 7-phosphate: step 4/4. Its pathway is bacterial outer membrane biogenesis; LPS core biosynthesis. Catalyzes the interconversion between ADP-D-glycero-beta-D-manno-heptose and ADP-L-glycero-beta-D-manno-heptose via an epimerization at carbon 6 of the heptose. In Bordetella parapertussis (strain 12822 / ATCC BAA-587 / NCTC 13253), this protein is ADP-L-glycero-D-manno-heptose-6-epimerase.